A 686-amino-acid polypeptide reads, in one-letter code: ATP-dependent zinc metalloprotease FTSH 1, chloroplastic (686 aa).

The transit peptide at 1–16 directs the protein to the chloroplast; sequence MAPPCSISSASHLLIT. A helical transmembrane segment spans residues 173–193; it reads FLAFVGNLLFPFLAFAGLFFL. 272–279 is an ATP binding site; that stretch reads GPPGTGKT. Histidine 494 serves as a coordination point for Zn(2+). Residue glutamate 495 is part of the active site. 2 residues coordinate Zn(2+): histidine 498 and aspartate 575.

This sequence in the N-terminal section; belongs to the AAA ATPase family. It in the C-terminal section; belongs to the peptidase M41 family. Zn(2+) is required as a cofactor.

The protein localises to the plastid. Its subcellular location is the chloroplast thylakoid membrane. In terms of biological role, probable ATP-dependent zinc metallopeptidase. In Oryza sativa subsp. japonica (Rice), this protein is ATP-dependent zinc metalloprotease FTSH 1, chloroplastic (FTSH1).